A 567-amino-acid polypeptide reads, in one-letter code: Proline--tRNA ligase (567 aa).

The protein belongs to the class-II aminoacyl-tRNA synthetase family. ProS type 1 subfamily. Homodimer.

Its subcellular location is the cytoplasm. It carries out the reaction tRNA(Pro) + L-proline + ATP = L-prolyl-tRNA(Pro) + AMP + diphosphate. In terms of biological role, catalyzes the attachment of proline to tRNA(Pro) in a two-step reaction: proline is first activated by ATP to form Pro-AMP and then transferred to the acceptor end of tRNA(Pro). As ProRS can inadvertently accommodate and process non-cognate amino acids such as alanine and cysteine, to avoid such errors it has two additional distinct editing activities against alanine. One activity is designated as 'pretransfer' editing and involves the tRNA(Pro)-independent hydrolysis of activated Ala-AMP. The other activity is designated 'posttransfer' editing and involves deacylation of mischarged Ala-tRNA(Pro). The misacylated Cys-tRNA(Pro) is not edited by ProRS. This is Proline--tRNA ligase from Idiomarina loihiensis (strain ATCC BAA-735 / DSM 15497 / L2-TR).